The sequence spans 300 residues: ClpXP adapter protein SpxH (300 aa).

This sequence belongs to the SpxH family. In terms of assembly, interacts with Spx.

Its subcellular location is the cytoplasm. In terms of biological role, adapter protein required for efficient degradation of Spx by ClpXP under non-stress conditions. Interaction with Spx stabilizes Spx and exposes the C-terminus of Spx for recognition and proteolysis by ClpXP. The polypeptide is ClpXP adapter protein SpxH (Bacillus licheniformis (strain ATCC 14580 / DSM 13 / JCM 2505 / CCUG 7422 / NBRC 12200 / NCIMB 9375 / NCTC 10341 / NRRL NRS-1264 / Gibson 46)).